The sequence spans 309 residues: ADP,ATP carrier protein 1 (309 aa).

3 Solcar repeats span residues 11 to 104 (SHFG…IKSL), 116 to 208 (KWFA…FKPV), and 216 to 302 (GSFV…LQLI). 5 helical membrane passes run 13 to 40 (FGVD…VKLL), 81 to 105 (TANV…KSLL), 114 to 134 (YAKW…LSLL), 184 to 205 (FVPS…YDSF), and 219 to 239 (VASF…SYPL). ADP is bound by residues arginine 86 and lysine 98. ADP is bound at residue arginine 243. The important for transport activity stretch occupies residues 243–248 (RRRMMM). Positions 243 to 248 (RRRMMM) match the Nucleotide carrier signature motif motif. The chain crosses the membrane as a helical span at residues 279-299 (CGANIFRGVAAAGVISLYDQL).

This sequence belongs to the mitochondrial carrier (TC 2.A.29) family. In terms of assembly, monomer.

The protein resides in the mitochondrion inner membrane. It catalyses the reaction ADP(in) + ATP(out) = ADP(out) + ATP(in). Its activity is regulated as follows. The matrix-open state (m-state) is inhibited by the membrane-permeable bongkrekic acid (BKA). The cytoplasmic-open state (c-state) is inhibited by the membrane-impermeable toxic inhibitor carboxyatractyloside (CATR). In terms of biological role, ADP:ATP antiporter that mediates import of ADP into the mitochondrial matrix for ATP synthesis, and export of ATP out to fuel the cell. Cycles between the cytoplasmic-open state (c-state) and the matrix-open state (m-state): operates by the alternating access mechanism with a single substrate-binding site intermittently exposed to either the cytosolic (c-state) or matrix (m-state) side of the inner mitochondrial membrane. The protein is ADP,ATP carrier protein 1 (AAC1) of Saccharomyces cerevisiae (strain ATCC 204508 / S288c) (Baker's yeast).